Reading from the N-terminus, the 514-residue chain is Na(+)/H(+) antiporter NhaB (514 aa).

11 consecutive transmembrane segments (helical) span residues 13–33, 34–54, 96–116, 136–156, 203–223, 236–256, 304–324, 349–369, 392–412, 448–468, and 479–499; these read FMGN…IINP, LIFF…EFIF, VILL…LLLF, CFAS…AVVI, LMMH…VGEP, FVTF…AGLA, ALIG…VGII, EEAL…AVII, LFYL…VGTV, ATPN…SPLI, and ALPY…FWLV.

It belongs to the NhaB Na(+)/H(+) (TC 2.A.34) antiporter family.

The protein localises to the cell inner membrane. It carries out the reaction 2 Na(+)(in) + 3 H(+)(out) = 2 Na(+)(out) + 3 H(+)(in). Functionally, na(+)/H(+) antiporter that extrudes sodium in exchange for external protons. The protein is Na(+)/H(+) antiporter NhaB of Proteus mirabilis (strain HI4320).